Here is a 478-residue protein sequence, read N- to C-terminus: tRNA(Ile)-lysidine synthase (478 aa).

Residue 27 to 32 coordinates ATP; sequence SGGSDS.

The protein belongs to the tRNA(Ile)-lysidine synthase family.

The protein resides in the cytoplasm. It carries out the reaction cytidine(34) in tRNA(Ile2) + L-lysine + ATP = lysidine(34) in tRNA(Ile2) + AMP + diphosphate + H(+). In terms of biological role, ligates lysine onto the cytidine present at position 34 of the AUA codon-specific tRNA(Ile) that contains the anticodon CAU, in an ATP-dependent manner. Cytidine is converted to lysidine, thus changing the amino acid specificity of the tRNA from methionine to isoleucine. This chain is tRNA(Ile)-lysidine synthase, found in Rickettsia rickettsii (strain Iowa).